The sequence spans 103 residues: Matrix Gla protein (103 aa).

The N-terminal stretch at methionine 1–cysteine 19 is a signal peptide. The residue at position 21 (glutamate 21) is a 4-carboxyglutamate; partial. Phosphoserine occurs at positions 22, 25, and 28. Positions arginine 51–arginine 97 constitute a Gla domain. Glutamate 56, glutamate 60, glutamate 67, and glutamate 71 each carry 4-carboxyglutamate. A disulfide bridge connects residues cysteine 73 and cysteine 79. The propeptide at arginine 99 to alanine 102 is removed in short form; probably by carboxypeptidase N. A propeptide (removed in long form; probably by carboxypeptidase H) is located at residue lysine 103.

This sequence belongs to the osteocalcin/matrix Gla protein family. Requires vitamin K-dependent gamma-carboxylation for its function.

The protein localises to the secreted. Associates with the organic matrix of bone and cartilage. Thought to act as an inhibitor of bone formation. The sequence is that of Matrix Gla protein (MGP) from Bos taurus (Bovine).